A 1404-amino-acid polypeptide reads, in one-letter code: Microtubule organization protein AKNA (1404 aa).

Disordered regions lie at residues 1–304 and 317–382; these read MASS…VSPL and QHKQ…RPLI. A Phosphoserine modification is found at Ser-51. The segment covering 70 to 91 has biased composition (acidic residues); sequence WDPDMQDSEESSGEETEADDAS. Residues 185–203 are compositionally biased toward polar residues; sequence KSWSSGTVSLRQPSDSLGS. Ser-302 bears the Phosphoserine mark. Ser-485 and Ser-520 each carry phosphoserine. Positions 494 to 549 are disordered; sequence AEWWPDPAQDPQASEATGWPFPRTDLSPSSSPGVATPGRLPQSQGIATDQPSTGQT. Residues 534–549 are compositionally biased toward polar residues; it reads PQSQGIATDQPSTGQT. Ser-617 is modified (phosphoserine). Over residues 645 to 659 the composition is skewed to basic and acidic residues; sequence MDQTQRETEPCRPDL. The segment at 645 to 708 is disordered; the sequence is MDQTQRETEP…TSPGSSCTLP (64 aa). 2 stretches are compositionally biased toward polar residues: residues 660 to 674 and 686 to 707; these read QDST…QSAH and DGQT…SCTL. 2 positions are modified to phosphoserine: Ser-750 and Ser-753. The tract at residues 754–787 is PEST; the sequence is LPEALRDEDEDDLEEEEEEQDHQGPLEVDSPATA. Disordered regions lie at residues 755 to 1038 and 1085 to 1185; these read PEAL…STAN and HSTQ…RERV. Positions 759–773 are enriched in acidic residues; sequence RDEDEDDLEEEEEEQ. Residues 803–813 are compositionally biased toward basic and acidic residues; that stretch reads TQAEESHRDAT. Residues Ser-831 and Ser-860 each carry the phosphoserine modification. Residues 885 to 906 are PEST; the sequence is HTEEPWMVSPETDSGFVGSETS. Polar residues-rich tracts occupy residues 903 to 914, 921 to 933, and 963 to 974; these read SETSIVSPFTQT, HVST…QHLT, and SRTQQHFSSLSS. Ser-971 bears the Phosphoserine mark. The segment covering 1015 to 1029 has biased composition (low complexity); that stretch reads TSPDSAPAPTAASTP. A compositionally biased stretch (polar residues) spans 1085–1098; the sequence is HSTQTQEKLGSSPS. Positions 1088 to 1096 form a DNA-binding region, a.T hook; it reads QTQEKLGSS. Phosphoserine occurs at positions 1144 and 1145. Positions 1155–1167 are enriched in basic and acidic residues; the sequence is SSEKSRTFEEHPE. Ser-1200 is modified (phosphoserine). Disordered stretches follow at residues 1208–1235 and 1253–1286; these read SGTP…TTRG and SAEA…QTGS. The segment covering 1221–1235 has biased composition (polar residues); it reads TQDTGSAVSRDTTRG. A phosphoserine mark is found at Ser-1339, Ser-1352, and Ser-1389.

Belongs to the AKNA family. In terms of assembly, interacts with DCTN1. Interacts with MAPRE1/EB1. Interacts with ODF2. Interacts with CAMSAP3. In terms of processing, phosphorylated; phosphorylation regulates dissociation from and reassembly at the centrosome. As to expression, expressed in neural stem cells isolated at the peak of subventricular zone (SVZ): localizes at the subdistal appendages of the mother centriole in specific subtypes of neural stem cells and in almost all basal progenitors.

The protein resides in the cytoplasm. The protein localises to the cytoskeleton. It localises to the microtubule organizing center. It is found in the centrosome. Its subcellular location is the centriole. The protein resides in the nucleus. Centrosomal protein that plays a key role in cell delamination by regulating microtubule organization. Required for the delamination and retention of neural stem cells from the subventricular zone during neurogenesis. Also regulates the epithelial-to-mesenchymal transition in other epithelial cells. Acts by increasing centrosomal microtubule nucleation and recruiting nucleation factors and minus-end stabilizers, thereby destabilizing microtubules at the adherens junctions and mediating constriction of the apical endfoot. In addition, may also act as a transcription factor that specifically activates the expression of the CD40 receptor and its ligand CD40L/CD154, two cell surface molecules on lymphocytes that are critical for antigen-dependent-B-cell development. Binds to A/T-rich promoters. It is unclear how it can both act as a microtubule organizer and as a transcription factor; additional evidences are required to reconcile these two apparently contradictory functions. This Mus musculus (Mouse) protein is Microtubule organization protein AKNA.